The sequence spans 86 residues: Kappa-theraphotoxin-Cg1a 3 (86 aa).

The signal sequence occupies residues 1–21; that stretch reads MKVSVLITLAVLGVMFVWASA. A propeptide spanning residues 22–50 is cleaved from the precursor; sequence AELEERGSDQRDSPAWLKSMERIFRSEER. 3 disulfide bridges follow: Cys52/Cys66, Cys59/Cys71, and Cys65/Cys78. Phe84 carries the phenylalanine amide modification.

This sequence belongs to the neurotoxin 10 (Hwtx-1) family. 28 (Jztx-11) subfamily. In terms of tissue distribution, expressed by the venom gland.

The protein resides in the secreted. Its function is as follows. This toxin acts as a voltage-dependent gating-modifier. It inhibits the sodium conductance (IC(50)=124 nM) and slows the fast inactivation (EC(50)=1180 nM) of Nav1.5/SCN5A. It significantly shifts the activation to more depolarized voltages and decreases the deactivation of Nav1.5 currents upon extreme depolarization, but only slightly affects voltage-dependence of steady-state inactivation. In addition, this toxin causes an approximately five-fold decrease in the rate of recovery from inactivation and an approximately 1.9-fold reduction in the closed-state inactivation rate. This toxin integrates the functions of site 3 toxins (alpha-scorpion toxins) with site 4 toxins (beta-scorpion and spider toxins) by targeting multiple sites on Nav1.5. Also shows inhibition of voltage-gated potassium channels (5 uM completely inhibits Kv2.1/KCNB1, whereas 5 uM moderately inhibits Kv4.2/KCND2 Kv4.1/KCND1 channels). The protein is Kappa-theraphotoxin-Cg1a 3 of Chilobrachys guangxiensis (Chinese earth tiger tarantula).